A 464-amino-acid polypeptide reads, in one-letter code: UDP-N-acetylmuramate--L-alanine ligase (464 aa).

111-117 (GAHGKTT) contacts ATP.

Belongs to the MurCDEF family.

Its subcellular location is the cytoplasm. It carries out the reaction UDP-N-acetyl-alpha-D-muramate + L-alanine + ATP = UDP-N-acetyl-alpha-D-muramoyl-L-alanine + ADP + phosphate + H(+). It functions in the pathway cell wall biogenesis; peptidoglycan biosynthesis. In terms of biological role, cell wall formation. The protein is UDP-N-acetylmuramate--L-alanine ligase of Dictyoglomus turgidum (strain DSM 6724 / Z-1310).